We begin with the raw amino-acid sequence, 280 residues long: Maltodextrin transport system permease protein MalD (280 aa).

Helical transmembrane passes span 15-35 (LTYL…LITI), 77-97 (LIIA…AGYA), 110-130 (LVFF…AFFV), 142-162 (WFLI…LMKG), 200-220 (VQAL…SFLL), and 244-264 (IAYF…LFFF). The ABC transmembrane type-1 domain occupies 73–265 (YLNTLIIALI…LPICILFFFL (193 aa)).

The protein belongs to the binding-protein-dependent transport system permease family. MalFG subfamily.

The protein resides in the cell membrane. Part of the binding-protein-dependent transport system for maltodextrin; probably responsible for the translocation of the substrate across the membrane. The sequence is that of Maltodextrin transport system permease protein MalD (malD) from Streptococcus pneumoniae (strain ATCC BAA-255 / R6).